Reading from the N-terminus, the 264-residue chain is Large ribosomal subunit protein uL2 (264 aa).

This sequence belongs to the universal ribosomal protein uL2 family.

It is found in the cytoplasm. The polypeptide is Large ribosomal subunit protein uL2 (RPL8) (Tetrahymena thermophila (strain SB210)).